A 627-amino-acid polypeptide reads, in one-letter code: RNA interference defective protein 10 (627 aa).

Disordered regions lie at residues 1 to 31 (MSNH…VRQN), 467 to 487 (QRDT…HDQY), and 523 to 589 (SSVR…SEDY). Basic and acidic residues-rich tracts occupy residues 7-16 (NFRDYQREGI), 467-478 (QRDTDEQYDVHQ), and 526-537 (REPEHPSARSRD).

It belongs to the maelstrom family. In terms of assembly, interacts with rde-11 (via RING-type zinc finger domain). Interacts with ergo-1.

Functionally, in complex with rde-11, required in the endogenous and exogenous siRNA pathway for biogenesis and accumulation of secondary small interfering RNA (siRNA) intermediates, such as 22G-siRNAs derived from ergo-1 targets. The polypeptide is RNA interference defective protein 10 (Caenorhabditis elegans).